Here is a 421-residue protein sequence, read N- to C-terminus: CinA-like protein (421 aa).

It belongs to the CinA family.

The protein is CinA-like protein of Synechococcus elongatus (strain ATCC 33912 / PCC 7942 / FACHB-805) (Anacystis nidulans R2).